The sequence spans 366 residues: uncharacterized protein (366 aa).

A PINc domain is found at 169–280; the sequence is ILDTSVIIDG…LNKVCELQKV (112 aa). Asp250 is a binding site for Mg(2+). A TRAM domain is found at 295-356; the sequence is VVLPGEEMNV…LQTAAGRMIF (62 aa).

The protein belongs to the ycf81 family. In the central section; belongs to the PINc/VapC protein family. Requires Mg(2+) as cofactor.

In terms of biological role, an RNase. This is an uncharacterized protein from Bacillus subtilis (strain 168).